The primary structure comprises 210 residues: Glycerol-3-phosphate acyltransferase (210 aa).

The next 6 helical transmembrane spans lie at 8-28, 56-76, 87-107, 119-139, 144-164, and 165-185; these read LILL…LLLT, GLAA…VLIA, TMAV…WLGF, TIWV…LLVA, ISSA…VLLS, and GRPL…LIWA.

Belongs to the PlsY family. Probably interacts with PlsX.

The protein localises to the cell inner membrane. It carries out the reaction an acyl phosphate + sn-glycerol 3-phosphate = a 1-acyl-sn-glycero-3-phosphate + phosphate. It participates in lipid metabolism; phospholipid metabolism. Functionally, catalyzes the transfer of an acyl group from acyl-phosphate (acyl-PO(4)) to glycerol-3-phosphate (G3P) to form lysophosphatidic acid (LPA). This enzyme utilizes acyl-phosphate as fatty acyl donor, but not acyl-CoA or acyl-ACP. The chain is Glycerol-3-phosphate acyltransferase from Gluconobacter oxydans (strain 621H) (Gluconobacter suboxydans).